Consider the following 264-residue polypeptide: DNA repair protein RecO (264 aa).

It belongs to the RecO family.

Functionally, involved in DNA repair and RecF pathway recombination. This chain is DNA repair protein RecO, found in Prosthecochloris aestuarii (strain DSM 271 / SK 413).